The following is a 747-amino-acid chain: AMP deaminase 1 (747 aa).

Position 81 is a phosphothreonine (T81). S85 is subject to Phosphoserine. Y216 bears the Phosphotyrosine mark. Positions 303 and 305 each coordinate Zn(2+). Residues H305 and 374 to 379 (KFNDKY) contribute to the substrate site. Residue S441 is modified to Phosphoserine. Position 572 (H572) interacts with Zn(2+). E575 serves as a coordination point for substrate. The Proton acceptor role is filled by H594. D649 is a binding site for Zn(2+). Position 650–653 (650–653 (DPMQ)) interacts with substrate.

Belongs to the metallo-dependent hydrolases superfamily. Adenosine and AMP deaminases family. As to quaternary structure, homotetramer. Zn(2+) serves as cofactor.

It catalyses the reaction AMP + H2O + H(+) = IMP + NH4(+). Its pathway is purine metabolism; IMP biosynthesis via salvage pathway; IMP from AMP: step 1/1. Functionally, AMP deaminase plays a critical role in energy metabolism. The protein is AMP deaminase 1 of Homo sapiens (Human).